We begin with the raw amino-acid sequence, 606 residues long: MRATTTAAGITWMSRYIYEYHRLMLEDLAPGAAATLGWPLYREPPPHFLVGYQYLVRTCNDYVFDSRAYSRLRYTETVQPGTQTVNWSVMTNCSYTINAGAYHRFVDVDDFATTLTQIQQAVLAERVVADLALLQPLQGYGSTHMADRGNREVEVERLMQDYYKDLGRCQSDVWGMADRLRIQQAGPKDVVLLKTIRGLKTAYFNYIISSIAQLPGTLEETKLSLPCDCDWLDAFLERFSDPVDMQTLSSLRGVPTQQIIKCIISAVSLPNAPRNASFPILHETELRGGVFELRPRENGRAVTETMRRRRGEMIERFVDRLPVRRRRRRQPPPPVVEEEIMEVEEEEQEIVPGAFQQEVRETVAELIRLLEEELTVAARNSQFFNFAVDFYEAMERLEALGDINELTLRRWILYFFVSEHVATTLNYLFQRLRNYGVFARLVELNLAQVVMRARDSEGGVVYSRVWNEIGLNAFSQLMSRISNDLAATIERAGHGDLQEEEIDQLMAEIAYQDNSGDVQEILRQAAVNDTEIDSVELSFRFKTTGPVVFTQRRQIQDINRRVVAHASQLRAQHLPLPERQADIPLPPLPAGPEPPLPPGARPRRRF.

Positions 320 to 329 match the Nuclear localization signal motif; that stretch reads RLPVRRRRRR. Serine 515 carries the O-(5'-phospho-DNA)-serine modification. A disordered region spans residues 573–606; it reads HLPLPERQADIPLPPLPAGPEPPLPPGARPRRRF. Pro residues predominate over residues 584-600; the sequence is PLPPLPAGPEPPLPPGA.

This sequence belongs to the adenoviridae terminal protein family. In terms of assembly, heterodimer with the polymerase; this heterodimer binds to bp 9 to 18 of the genome. Interacts with host POU2F1; POU2F1 binds to the auxiliary sequences in the inverted terminal repeats and tethers the pTP-POL heterodimer to the origin DNA thereby participating in the assembly of the pre-initiation complex (POL-TP-DBP-NFIA-POU2F1). In terms of processing, preterminal protein is used to replicate viral genome, upon genomic encapsidation it is processed first into iTP and finally into TP by adenovirus protease.

The protein localises to the host nucleus matrix. Protein covalently bound to the viral DNA that acts as a primer for viral genomic replication by DNA strand displacement. Assembles on the viral origin of replication in an initiation complex with viral polymerase, DBP, host NFIA and host POU2F1/OCT1. During initiation, the polymerase covalently couples the first dCTP with Ser-580 of pTP. The terminal protein stimulates the template activity over 20 fold compared to protein-free templates. Neo-synthesized viral genomes are linked to two preterminal proteins, one for each 5' end. These new genomes are encapsidated in the nucleus, and during capsid maturation by viral protease, preterminal protein is first cleaved into intermediary (iTP), then into mature TP. May play a role in host nuclear matrix localization of genomic DNA. In Human adenovirus A serotype 12 (HAdV-12), this protein is Preterminal protein.